The primary structure comprises 354 residues: Probable cinnamyl alcohol dehydrogenase 1 (354 aa).

8 residues coordinate Zn(2+): Cys-47, His-69, Glu-70, Cys-100, Cys-103, Cys-106, Cys-114, and Cys-163. NADP(+)-binding positions include Thr-167, 188-193 (GLGGLG), 211-216 (STSESK), Thr-251, and 297-299 (SVT).

It belongs to the zinc-containing alcohol dehydrogenase family. In terms of assembly, homodimer. Zn(2+) serves as cofactor.

It catalyses the reaction (E)-cinnamyl alcohol + NADP(+) = (E)-cinnamaldehyde + NADPH + H(+). The catalysed reaction is (E)-coniferol + NADP(+) = (E)-coniferaldehyde + NADPH + H(+). It carries out the reaction (E)-sinapyl alcohol + NADP(+) = (E)-sinapaldehyde + NADPH + H(+). The enzyme catalyses (E)-4-coumaroyl alcohol + NADP(+) = (E)-4-coumaraldehyde + NADPH + H(+). It catalyses the reaction (E)-caffeyl alcohol + NADP(+) = (E)-caffeyl aldehyde + NADPH + H(+). Its pathway is aromatic compound metabolism; phenylpropanoid biosynthesis. Functionally, involved in lignin biosynthesis. Catalyzes the final step specific for the production of lignin monomers. Catalyzes the NADPH-dependent reduction of coniferaldehyde, 5-hydroxyconiferaldehyde, sinapaldehyde, 4-coumaraldehyde and caffeyl aldehyde to their respective alcohols. This is Probable cinnamyl alcohol dehydrogenase 1 from Oryza sativa subsp. japonica (Rice).